The sequence spans 347 residues: NADH-ubiquinone oxidoreductase chain 2 (347 aa).

A run of 11 helical transmembrane segments spans residues 3–23, 25–45, 60–80, 96–116, 122–142, 153–173, 178–198, 200–220, 237–257, 274–294, and 323–343; these read PPILIIIMSTVMSGTMIVLTS, HWLLIWIGFEMNMLAIIPILM, FLTQATASMLLMMGIIINLMF, GLVTIALTMKLGMAPFHFWVP, ISLSSGMILLTWQKIAPLSIL, LLITMAIASVLIGGWGGLNQT, ILAYSSIAHMGWMAVILTYNP, LMILNLTIYITMTLSTFMLFM, LPLMTSLILVLMMSLGGLPPL, DMIILPTFMAITALLNLYFYM, and IILLPPLIIISTMLLPMTPMM.

Belongs to the complex I subunit 2 family. As to quaternary structure, core subunit of respiratory chain NADH dehydrogenase (Complex I) which is composed of 45 different subunits. Interacts with TMEM242.

The protein localises to the mitochondrion inner membrane. It catalyses the reaction a ubiquinone + NADH + 5 H(+)(in) = a ubiquinol + NAD(+) + 4 H(+)(out). Core subunit of the mitochondrial membrane respiratory chain NADH dehydrogenase (Complex I) which catalyzes electron transfer from NADH through the respiratory chain, using ubiquinone as an electron acceptor. Essential for the catalytic activity and assembly of complex I. The polypeptide is NADH-ubiquinone oxidoreductase chain 2 (Halichoerus grypus (Gray seal)).